Here is a 171-residue protein sequence, read N- to C-terminus: Adenine phosphoribosyltransferase (171 aa).

This sequence belongs to the purine/pyrimidine phosphoribosyltransferase family. Homodimer.

The protein resides in the cytoplasm. The catalysed reaction is AMP + diphosphate = 5-phospho-alpha-D-ribose 1-diphosphate + adenine. It participates in purine metabolism; AMP biosynthesis via salvage pathway; AMP from adenine: step 1/1. Catalyzes a salvage reaction resulting in the formation of AMP, that is energically less costly than de novo synthesis. The sequence is that of Adenine phosphoribosyltransferase from Gloeobacter violaceus (strain ATCC 29082 / PCC 7421).